Consider the following 238-residue polypeptide: Urease accessory protein UreF (238 aa).

This sequence belongs to the UreF family. As to quaternary structure, ureD, UreF and UreG form a complex that acts as a GTP-hydrolysis-dependent molecular chaperone, activating the urease apoprotein by helping to assemble the nickel containing metallocenter of UreC. The UreE protein probably delivers the nickel.

The protein resides in the cytoplasm. Required for maturation of urease via the functional incorporation of the urease nickel metallocenter. This Rhodopseudomonas palustris (strain BisA53) protein is Urease accessory protein UreF.